Consider the following 298-residue polypeptide: MSDQALSFLKDFLAGGVAAAVSKTAVAPIERVKLLLQVQHASKQISAEKQYKGIIDCVVRIPKEQGFLSFWRGNLANVIRYFPTQALNFAFKDKYKQIFLGGVDRHKQFWRYFAGNLASGGAAGATSLCFVYPLDFARTRLAADVGKGAAQREFSGLGNCLTKIFKSDGLRGLYQGFNVSVQGIIIYRAAYFGVYDTAKGMLPDPKNVHIIVSWMIAQTVTAVAGLVSYPFDTVRRRMMMQSGRKGADIMYTGTVDCWKKIAKDEGAKAFFKGAWSNVLRGMGGAFVLVLYDEIKKYV.

At 1-7 (MSDQALS) the chain is on the mitochondrial intermembrane side. An N-acetylserine modification is found at Ser2. The Solcar 1 repeat unit spans residues 6–98 (LSFLKDFLAG…FAFKDKYKQI (93 aa)). Ser7 is modified (phosphoserine). Residues 8–37 (FLKDFLAGGVAAAVSKTAVAPIERVKLLLQ) form a helical membrane-spanning segment. Residues 38–74 (VQHASKQISAEKQYKGIIDCVVRIPKEQGFLSFWRGN) lie on the Mitochondrial matrix side of the membrane. Lys52 bears the N6,N6,N6-trimethyllysine mark. The chain crosses the membrane as a helical span at residues 75–99 (LANVIRYFPTQALNFAFKDKYKQIF). Residues Arg80 and Lys92 each coordinate ADP. Topologically, residues 100–109 (LGGVDRHKQF) are mitochondrial intermembrane. Residues 110–130 (WRYFAGNLASGGAAGATSLCF) form a helical membrane-spanning segment. 2 Solcar repeats span residues 111–201 (RYFA…AKGM) and 212–297 (VSWM…IKKY). Over 131-178 (VYPLDFARTRLAADVGKGAAQREFSGLGNCLTKIFKSDGLRGLYQGFN) the chain is Mitochondrial matrix. Lys147 carries the post-translational modification N6-succinyllysine. Cys160 is subject to S-nitrosocysteine. Residues 179–199 (VSVQGIIIYRAAYFGVYDTAK) traverse the membrane as a helical segment. Over 200–210 (GMLPDPKNVHI) the chain is Mitochondrial intermembrane. The helical transmembrane segment at 211–231 (IVSWMIAQTVTAVAGLVSYPF) threads the bilayer. Over 232–273 (DTVRRRMMMQSGRKGADIMYTGTVDCWKKIAKDEGAKAFFKG) the chain is Mitochondrial matrix. Position 235 (Arg235) interacts with ADP. The interval 235–240 (RRRMMM) is important for transport activity. The Nucleotide carrier signature motif signature appears at 235 to 240 (RRRMMM). Lys245 and Lys272 each carry N6-succinyllysine. A helical membrane pass occupies residues 274–291 (AWSNVLRGMGGAFVLVLY). Topologically, residues 292–298 (DEIKKYV) are mitochondrial intermembrane.

It belongs to the mitochondrial carrier (TC 2.A.29) family. As to quaternary structure, monomer. Found in a complex with ARL2, ARL2BP and SLC25A4/ANT1. Interacts with ARL2BP. Interacts with TIMM44; leading to inhibit the presequence translocase TIMM23, thereby promoting stabilization of PINK1. In terms of processing, under cell death induction, transglutaminated by TGM2. Transglutamination leads to formation of covalent cross-links between a glutamine and the epsilon-amino group of a lysine residue, forming polymers.

Its subcellular location is the mitochondrion inner membrane. It localises to the membrane. The enzyme catalyses ADP(in) + ATP(out) = ADP(out) + ATP(in). The catalysed reaction is H(+)(in) = H(+)(out). The matrix-open state (m-state) is inhibited by the membrane-permeable bongkrekic acid (BKA). The cytoplasmic-open state (c-state) is inhibited by the membrane-impermeable toxic inhibitor carboxyatractyloside (CATR). Proton transporter activity is inhibited by ADP:ATP antiporter activity. In terms of biological role, ADP:ATP antiporter that mediates import of ADP into the mitochondrial matrix for ATP synthesis, and export of ATP out to fuel the cell. Cycles between the cytoplasmic-open state (c-state) and the matrix-open state (m-state): operates by the alternating access mechanism with a single substrate-binding site intermittently exposed to either the cytosolic (c-state) or matrix (m-state) side of the inner mitochondrial membrane. In addition to its ADP:ATP antiporter activity, also involved in mitochondrial uncoupling and mitochondrial permeability transition pore (mPTP) activity. Plays a role in mitochondrial uncoupling by acting as a proton transporter: proton transport uncouples the proton flows via the electron transport chain and ATP synthase to reduce the efficiency of ATP production and cause mitochondrial thermogenesis. Proton transporter activity is inhibited by ADP:ATP antiporter activity, suggesting that SLC25A4/ANT1 acts as a master regulator of mitochondrial energy output by maintaining a delicate balance between ATP production (ADP:ATP antiporter activity) and thermogenesis (proton transporter activity). Proton transporter activity requires free fatty acids as cofactor, but does not transport it. Probably mediates mitochondrial uncoupling in tissues that do not express UCP1. Also plays a key role in mPTP opening, a non-specific pore that enables free passage of the mitochondrial membranes to solutes of up to 1.5 kDa, and which contributes to cell death. It is however unclear if SLC25A4/ANT1 constitutes a pore-forming component of mPTP or regulates it. Acts as a regulator of mitophagy independently of ADP:ATP antiporter activity: promotes mitophagy via interaction with TIMM44, leading to inhibit the presequence translocase TIMM23, thereby promoting stabilization of PINK1. The polypeptide is ADP/ATP translocase 1 (Oryctolagus cuniculus (Rabbit)).